The sequence spans 404 residues: Tryptophan synthase beta chain (404 aa).

K94 is modified (N6-(pyridoxal phosphate)lysine).

The protein belongs to the TrpB family. As to quaternary structure, tetramer of two alpha and two beta chains. It depends on pyridoxal 5'-phosphate as a cofactor.

It catalyses the reaction (1S,2R)-1-C-(indol-3-yl)glycerol 3-phosphate + L-serine = D-glyceraldehyde 3-phosphate + L-tryptophan + H2O. It participates in amino-acid biosynthesis; L-tryptophan biosynthesis; L-tryptophan from chorismate: step 5/5. Functionally, the beta subunit is responsible for the synthesis of L-tryptophan from indole and L-serine. This Staphylococcus aureus (strain USA300) protein is Tryptophan synthase beta chain.